A 714-amino-acid polypeptide reads, in one-letter code: Structure-specific endonuclease subunit SLX4 2 (714 aa).

Composition is skewed to basic and acidic residues over residues 1–14 and 24–34; these read MSPEGEESHAEDNL and IHEETLAEESH. Disordered regions lie at residues 1 to 114 and 338 to 369; these read MSPE…EQQG and SSGPVNDKQPSVASETVESDSTPIVSPVKTPQ. A compositionally biased stretch (polar residues) spans 36-46; the sequence is QAIQRSISRLS. A compositionally biased stretch (basic residues) spans 79–92; the sequence is KTKKRKLKVSKPRK.

This sequence belongs to the SLX4 family. In terms of assembly, forms a heterodimer with SLX1. In terms of processing, phosphorylated in response to DNA damage.

The protein resides in the nucleus. In terms of biological role, regulatory subunit of the SLX1-SLX4 structure-specific endonuclease that resolves DNA secondary structures generated during DNA repair and recombination. Has endonuclease activity towards branched DNA substrates, introducing single-strand cuts in duplex DNA close to junctions with ss-DNA. In Candida tropicalis (strain ATCC MYA-3404 / T1) (Yeast), this protein is Structure-specific endonuclease subunit SLX4 2.